The following is a 425-amino-acid chain: Serine hydroxymethyltransferase (425 aa).

Residues leucine 126 and 130 to 132 each bind (6S)-5,6,7,8-tetrahydrofolate; that span reads GHL. An N6-(pyridoxal phosphate)lysine modification is found at lysine 234.

The protein belongs to the SHMT family. Homodimer. Pyridoxal 5'-phosphate serves as cofactor.

Its subcellular location is the cytoplasm. It carries out the reaction (6R)-5,10-methylene-5,6,7,8-tetrahydrofolate + glycine + H2O = (6S)-5,6,7,8-tetrahydrofolate + L-serine. It participates in one-carbon metabolism; tetrahydrofolate interconversion. Its pathway is amino-acid biosynthesis; glycine biosynthesis; glycine from L-serine: step 1/1. Catalyzes the reversible interconversion of serine and glycine with tetrahydrofolate (THF) serving as the one-carbon carrier. This reaction serves as the major source of one-carbon groups required for the biosynthesis of purines, thymidylate, methionine, and other important biomolecules. Also exhibits THF-independent aldolase activity toward beta-hydroxyamino acids, producing glycine and aldehydes, via a retro-aldol mechanism. The chain is Serine hydroxymethyltransferase from Desulfotalea psychrophila (strain LSv54 / DSM 12343).